A 193-amino-acid chain; its full sequence is Nucleoside triphosphate pyrophosphatase (193 aa).

Asp70 functions as the Proton acceptor in the catalytic mechanism.

It belongs to the Maf family. A divalent metal cation is required as a cofactor.

It localises to the cytoplasm. It catalyses the reaction a ribonucleoside 5'-triphosphate + H2O = a ribonucleoside 5'-phosphate + diphosphate + H(+). The catalysed reaction is a 2'-deoxyribonucleoside 5'-triphosphate + H2O = a 2'-deoxyribonucleoside 5'-phosphate + diphosphate + H(+). Functionally, nucleoside triphosphate pyrophosphatase. May have a dual role in cell division arrest and in preventing the incorporation of modified nucleotides into cellular nucleic acids. The polypeptide is Nucleoside triphosphate pyrophosphatase (Anaplasma phagocytophilum (strain HZ)).